A 429-amino-acid polypeptide reads, in one-letter code: SET domain-containing protein 14 (429 aa).

C26, C29, C39, C42, C48, C52, H60, and C64 together coordinate Zn(2+). The segment at 26–64 (CNQCLTSMAELKKCSACRRLAYCSQECQRADWKLHKVEC) adopts an MYND-type zinc-finger fold.

It localises to the nucleus. The chain is SET domain-containing protein 14 (set-14) from Caenorhabditis elegans.